Reading from the N-terminus, the 311-residue chain is Ribosomal RNA small subunit methyltransferase H (311 aa).

S-adenosyl-L-methionine contacts are provided by residues 33 to 35 (AGH), Asp53, Phe80, Asp101, and Gln108.

This sequence belongs to the methyltransferase superfamily. RsmH family.

It is found in the cytoplasm. The enzyme catalyses cytidine(1402) in 16S rRNA + S-adenosyl-L-methionine = N(4)-methylcytidine(1402) in 16S rRNA + S-adenosyl-L-homocysteine + H(+). Specifically methylates the N4 position of cytidine in position 1402 (C1402) of 16S rRNA. The sequence is that of Ribosomal RNA small subunit methyltransferase H from Geobacter sulfurreducens (strain ATCC 51573 / DSM 12127 / PCA).